We begin with the raw amino-acid sequence, 1104 residues long: Extended synaptotagmin-1 (1104 aa).

Methionine 1 carries the N-acetylmethionine modification. The Cytoplasmic segment spans residues 1-38 (MERSPGEGPSPSPMDQPSAPSDPTDQPPAAHAKPDPGS). Residues 1–48 (MERSPGEGPSPSPMDQPSAPSDPTDQPPAAHAKPDPGSGGQPAGPGAA) are disordered. Residues 37–47 (GSGGQPAGPGA) show a composition bias toward gly residues. A helical membrane pass occupies residues 39 to 59 (GGQPAGPGAAGEALAVLTSFG). At 60 to 62 (RRL) the chain is on the lumenal side. Residues 63–83 (LVLIPVYLAGAVGLSVGFVLF) form a helical membrane-spanning segment. Over 84–1104 (GLALYLGWRR…LMDNKDKGSS (1021 aa)) the chain is Cytoplasmic. The stretch at 91–116 (WRRVRDEKERSLRAARQLLDDEEQLT) forms a coiled coil. An SMP-LTD domain is found at 135-313 (DVEKAEWLNK…LPNRLLVPLV (179 aa)). 4 C2 domains span residues 312 to 433 (LVPD…DDWF), 460 to 580 (QVLQ…QLSS), 627 to 751 (SVDA…DEWL), and 777 to 899 (LEEV…TLSS). The residue at position 324 (serine 324) is a Phosphoserine; by CDK5. Residues lysine 344, aspartate 345, aspartate 357, aspartate 404, aspartate 406, aspartate 408, aspartate 410, and aspartate 411 each coordinate Ca(2+). Positions 617 to 641 (VDSENPQRGSSVDAPPRPCHTTPDS) are disordered. N6-acetyllysine is present on lysine 817. 2 positions are modified to phosphoserine: serine 820 and serine 941. The segment at 924-950 (SHSYSHSSSSLSEEPELSGGPPHITSS) is disordered. The span at 925–946 (HSYSHSSSSLSEEPELSGGPPH) shows a compositional bias: low complexity. Phosphothreonine is present on threonine 948. Serine 949 and serine 963 each carry phosphoserine. Residues 971–1093 (PLGQVKLTLW…DLSQGVARWY (123 aa)) enclose the C2 5 domain. Tyrosine 1009 is modified (phosphotyrosine). The tract at residues 1018–1025 (KNRGTKRR) is required for phosphatidylinositol 4,5-bisphosphate-dependent location at the cell membrane. Position 1034 is a phosphoserine (serine 1034).

Belongs to the extended synaptotagmin family. In terms of assembly, interacts with ESYT2 and ESYT3. Interacts with ADGRD1; inhibiting the G-protein-coupled receptor activity of ADGRD1. Interaction with ADGRD1 is abolished when cytosolic calcium increases, relieving ADGRD1 G-protein-coupled receptor activity. Interacts (phosphorylated form) with SLC2A4. In terms of processing, phosphorylated on Ser residues in insulin-treated adipocytes (in vitro); this promotes interaction with SLC2A4. In terms of tissue distribution, widely expressed.

Its subcellular location is the endoplasmic reticulum membrane. The protein resides in the cell membrane. Its function is as follows. Binds calcium (via the C2 domains) and translocates to sites of contact between the endoplasmic reticulum and the cell membrane in response to increased cytosolic calcium levels. Helps tether the endoplasmic reticulum to the cell membrane and promotes the formation of appositions between the endoplasmic reticulum and the cell membrane. Acts as an inhibitor of ADGRD1 G-protein-coupled receptor activity in absence of cytosolic calcium. Binds glycerophospholipids in a barrel-like domain and may play a role in cellular lipid transport. This Homo sapiens (Human) protein is Extended synaptotagmin-1.